The chain runs to 321 residues: ATP-dependent 6-phosphofructokinase (321 aa).

Gly12 is an ATP binding site. 22–26 (RGVVR) is a binding site for ADP. Residues 73-74 (RF) and 103-106 (GDGS) contribute to the ATP site. Asp104 is a Mg(2+) binding site. 127–129 (TID) contributes to the substrate binding site. Asp129 functions as the Proton acceptor in the catalytic mechanism. Residue Arg156 coordinates ADP. Residues Arg164 and 171-173 (MGR) each bind substrate. ADP is bound by residues 187–189 (GCE), Lys213, and 215–217 (KRH). Residues Glu224, Arg245, and 251 to 254 (HTQR) contribute to the substrate site.

This sequence belongs to the phosphofructokinase type A (PFKA) family. ATP-dependent PFK group I subfamily. Prokaryotic clade 'B1' sub-subfamily. In terms of assembly, homotetramer. Requires Mg(2+) as cofactor.

It localises to the cytoplasm. It carries out the reaction beta-D-fructose 6-phosphate + ATP = beta-D-fructose 1,6-bisphosphate + ADP + H(+). It participates in carbohydrate degradation; glycolysis; D-glyceraldehyde 3-phosphate and glycerone phosphate from D-glucose: step 3/4. Allosterically activated by ADP and other diphosphonucleosides, and allosterically inhibited by phosphoenolpyruvate. Catalyzes the phosphorylation of D-fructose 6-phosphate to fructose 1,6-bisphosphate by ATP, the first committing step of glycolysis. The polypeptide is ATP-dependent 6-phosphofructokinase (Glaesserella parasuis serovar 5 (strain SH0165) (Haemophilus parasuis)).